Consider the following 307-residue polypeptide: DDRGK domain-containing protein 1 (307 aa).

Residues methionine 1 to aspartate 2 lie on the Lumenal side of the membrane. Residues leucine 3–leucine 23 traverse the membrane as a helical segment. At glutamine 24–alanine 307 the chain is on the cytoplasmic side. The interval glutamate 31–arginine 175 is disordered. The span at arginine 52–valine 83 shows a compositional bias: low complexity. Over residues leucine 107–arginine 175 the composition is skewed to basic and acidic residues.

Belongs to the DDRGK1 family. As to quaternary structure, interacts with Atg9; the interaction is transient.

It is found in the endoplasmic reticulum membrane. Functionally, substrate adapter for ufmylation, the covalent attachment of the ubiquitin-like modifier UFM1 to substrate proteins. Required for ufmylation of Atg9; protects the nervous system during aging, possibly by stabilizing Atg9 and supporting its function. This Drosophila virilis (Fruit fly) protein is DDRGK domain-containing protein 1.